Reading from the N-terminus, the 143-residue chain is UPF0047 protein MTH_771 (143 aa).

The protein belongs to the UPF0047 family.

In Methanothermobacter thermautotrophicus (strain ATCC 29096 / DSM 1053 / JCM 10044 / NBRC 100330 / Delta H) (Methanobacterium thermoautotrophicum), this protein is UPF0047 protein MTH_771.